The following is a 108-amino-acid chain: Putative pterin-4-alpha-carbinolamine dehydratase (108 aa).

The protein belongs to the pterin-4-alpha-carbinolamine dehydratase family.

It carries out the reaction (4aS,6R)-4a-hydroxy-L-erythro-5,6,7,8-tetrahydrobiopterin = (6R)-L-erythro-6,7-dihydrobiopterin + H2O. This is Putative pterin-4-alpha-carbinolamine dehydratase from Bordetella avium (strain 197N).